A 209-amino-acid chain; its full sequence is Guanylate kinase (209 aa).

A Guanylate kinase-like domain is found at 9–188 (GIMLVISSPS…SVYQIKCIFT (180 aa)). ATP is bound at residue 16 to 23 (SPSGGGKT).

It belongs to the guanylate kinase family.

It is found in the cytoplasm. The enzyme catalyses GMP + ATP = GDP + ADP. Essential for recycling GMP and indirectly, cGMP. The polypeptide is Guanylate kinase (Ehrlichia chaffeensis (strain ATCC CRL-10679 / Arkansas)).